We begin with the raw amino-acid sequence, 289 residues long: MAEITAAMVKELRERTGLGMMECKKALTAAGGDIEKAIDDMRAAGAIKAAKKAGNIAAEGSIAVKIAADNKAAVIIEVNSQTDFLALQDDFKGFVAESLEKAFNEKLTDAAPLVEAREEARLALVAKTGENVNIRRLTRVEGDVVGAYLHGHRIGVVVNLKGGNPELAKDIAMHVAASNPQFLNASEVSEEAIAKEKEIFLALNADKIAGKPENIVENMVKGRISKFLAEASLVEQPFVKNPEVKVGDLAKQAGAEIVSFVRYEVGEGIEKAEVDFAAEVAAQVAATKQ.

Positions 82–85 are involved in Mg(2+) ion dislocation from EF-Tu; the sequence is TDFL.

It belongs to the EF-Ts family.

It localises to the cytoplasm. Functionally, associates with the EF-Tu.GDP complex and induces the exchange of GDP to GTP. It remains bound to the aminoacyl-tRNA.EF-Tu.GTP complex up to the GTP hydrolysis stage on the ribosome. This Pseudomonas aeruginosa (strain LESB58) protein is Elongation factor Ts.